The following is a 97-amino-acid chain: Small ribosomal subunit protein bS6 (97 aa).

This sequence belongs to the bacterial ribosomal protein bS6 family.

Functionally, binds together with bS18 to 16S ribosomal RNA. This chain is Small ribosomal subunit protein bS6, found in Listeria innocua serovar 6a (strain ATCC BAA-680 / CLIP 11262).